The sequence spans 128 residues: Sirohydrochlorin cobaltochelatase (128 aa).

The active-site Proton acceptor is the H9. A Co(2+)-binding site is contributed by H9. Residues K43 and 68–73 (FATGTH) each bind substrate. H73 lines the Co(2+) pocket.

The protein belongs to the CbiX family. CbiXS subfamily. Homotetramer; dimer of dimers.

It carries out the reaction Co-sirohydrochlorin + 2 H(+) = sirohydrochlorin + Co(2+). Its pathway is cofactor biosynthesis; adenosylcobalamin biosynthesis; cob(II)yrinate a,c-diamide from sirohydrochlorin (anaerobic route): step 1/10. Catalyzes the insertion of Co(2+) into sirohydrochlorin as part of the anaerobic pathway to cobalamin biosynthesis. The polypeptide is Sirohydrochlorin cobaltochelatase (Saccharolobus solfataricus (strain ATCC 35092 / DSM 1617 / JCM 11322 / P2) (Sulfolobus solfataricus)).